Reading from the N-terminus, the 246-residue chain is NAD-dependent protein deacylase (246 aa).

A Deacetylase sirtuin-type domain is found at 1 to 245 (MKEFITKHRD…ELIREILDNP (245 aa)). Residue 20–39 (GAGISAESGIPTFRGSEGLW) participates in NAD(+) binding. The substrate site is built by Y64 and R67. Residue 98-101 (QNVD) participates in NAD(+) binding. Catalysis depends on H116, which acts as the Proton acceptor. Positions 124, 127, 146, and 149 each coordinate Zn(2+). NAD(+)-binding positions include 186–188 (GTS), 212–214 (NPE), and T230.

It belongs to the sirtuin family. Class III subfamily. The cofactor is Zn(2+).

Its subcellular location is the cytoplasm. It catalyses the reaction N(6)-acetyl-L-lysyl-[protein] + NAD(+) + H2O = 2''-O-acetyl-ADP-D-ribose + nicotinamide + L-lysyl-[protein]. It carries out the reaction N(6)-succinyl-L-lysyl-[protein] + NAD(+) + H2O = 2''-O-succinyl-ADP-D-ribose + nicotinamide + L-lysyl-[protein]. Functionally, NAD-dependent lysine deacetylase and desuccinylase that specifically removes acetyl and succinyl groups on target proteins. Modulates the activities of several proteins which are inactive in their acylated form. This Leptospira interrogans serogroup Icterohaemorrhagiae serovar Lai (strain 56601) protein is NAD-dependent protein deacylase.